Consider the following 219-residue polypeptide: Chloramphenicol acetyltransferase (219 aa).

The active-site Proton acceptor is the histidine 190.

The protein belongs to the chloramphenicol acetyltransferase family. Homotrimer.

It catalyses the reaction chloramphenicol + acetyl-CoA = chloramphenicol 3-acetate + CoA. This enzyme is an effector of chloramphenicol resistance in bacteria. The sequence is that of Chloramphenicol acetyltransferase (catB) from Clostridium butyricum.